The sequence spans 415 residues: Branched-chain-amino-acid aminotransferase, cytosolic (415 aa).

Lys244 is subject to N6-(pyridoxal phosphate)lysine.

The protein belongs to the class-IV pyridoxal-phosphate-dependent aminotransferase family. Pyridoxal 5'-phosphate is required as a cofactor.

It is found in the cytoplasm. It catalyses the reaction L-leucine + 2-oxoglutarate = 4-methyl-2-oxopentanoate + L-glutamate. It carries out the reaction L-isoleucine + 2-oxoglutarate = (S)-3-methyl-2-oxopentanoate + L-glutamate. The catalysed reaction is L-valine + 2-oxoglutarate = 3-methyl-2-oxobutanoate + L-glutamate. Catalyzes the first reaction in the catabolism of the essential branched chain amino acids leucine, isoleucine, and valine. The sequence is that of Branched-chain-amino-acid aminotransferase, cytosolic (bcat-1) from Caenorhabditis elegans.